A 447-amino-acid polypeptide reads, in one-letter code: Glycogen synthase (447 aa).

Residue R15 coordinates ADP-alpha-D-glucose.

Belongs to the glycosyltransferase 1 family. Bacterial/plant glycogen synthase subfamily.

It catalyses the reaction [(1-&gt;4)-alpha-D-glucosyl](n) + ADP-alpha-D-glucose = [(1-&gt;4)-alpha-D-glucosyl](n+1) + ADP + H(+). It functions in the pathway glycan biosynthesis; glycogen biosynthesis. Functionally, synthesizes alpha-1,4-glucan chains using ADP-glucose. In Deinococcus geothermalis (strain DSM 11300 / CIP 105573 / AG-3a), this protein is Glycogen synthase.